A 432-amino-acid chain; its full sequence is Putative D-alanyl-D-alanine carboxypeptidase (432 aa).

The helical; Signal-anchor transmembrane segment at 7–25 (ATVLLTFSLSAFAVEYPVL) threads the bilayer.

Belongs to the peptidase S12 family. YfeW subfamily.

The protein localises to the cell inner membrane. The enzyme catalyses Preferential cleavage: (Ac)2-L-Lys-D-Ala-|-D-Ala. Also transpeptidation of peptidyl-alanyl moieties that are N-acyl substituents of D-alanine.. This Salmonella gallinarum (strain 287/91 / NCTC 13346) protein is Putative D-alanyl-D-alanine carboxypeptidase.